Consider the following 176-residue polypeptide: MQNAKLMLTCLAFAGLAALAGCSFPGVYKIDIQQGNVVTQDMIDQLRPGMTRRQVRFIMGNPLIVDTFHANRWDYLYSIQPGGGRRQQERVSLFFNDSDQLAGLNGDFMPGVSRDEAILGKEGSTTVTQPADQQKPEAQKEEPPKPGSTLEQLQREVDEAQPVPVPTPEPLDPSPQ.

Positions 1–21 (MQNAKLMLTCLAFAGLAALAG) are cleaved as a signal peptide. C22 carries N-palmitoyl cysteine lipidation. C22 carries S-diacylglycerol cysteine lipidation. Residues 121 to 176 (KEGSTTVTQPADQQKPEAQKEEPPKPGSTLEQLQREVDEAQPVPVPTPEPLDPSPQ) are disordered. Residues 123–132 (GSTTVTQPAD) show a composition bias toward polar residues. A compositionally biased stretch (basic and acidic residues) spans 134–144 (QKPEAQKEEPP). Pro residues predominate over residues 163 to 176 (VPVPTPEPLDPSPQ).

Belongs to the BamE family. In terms of assembly, part of the Bam complex.

It is found in the cell outer membrane. In terms of biological role, part of the outer membrane protein assembly complex, which is involved in assembly and insertion of beta-barrel proteins into the outer membrane. May have a structural role in maintaining the cell envelope integrity. This chain is Outer membrane protein assembly factor BamE, found in Pseudomonas aeruginosa (strain ATCC 15692 / DSM 22644 / CIP 104116 / JCM 14847 / LMG 12228 / 1C / PRS 101 / PAO1).